The following is a 183-amino-acid chain: Hypoxanthine/guanine phosphoribosyltransferase (183 aa).

This sequence belongs to the purine/pyrimidine phosphoribosyltransferase family. Archaeal HPRT subfamily. Homodimer.

It localises to the cytoplasm. It carries out the reaction IMP + diphosphate = hypoxanthine + 5-phospho-alpha-D-ribose 1-diphosphate. The enzyme catalyses GMP + diphosphate = guanine + 5-phospho-alpha-D-ribose 1-diphosphate. The protein operates within purine metabolism; IMP biosynthesis via salvage pathway; IMP from hypoxanthine: step 1/1. Catalyzes a salvage reaction resulting in the formation of IMP that is energically less costly than de novo synthesis. This chain is Hypoxanthine/guanine phosphoribosyltransferase, found in Methanocaldococcus jannaschii (strain ATCC 43067 / DSM 2661 / JAL-1 / JCM 10045 / NBRC 100440) (Methanococcus jannaschii).